The sequence spans 696 residues: Probable transporter efuK (696 aa).

The tract at residues 603–642 (SLNGGKMQGASDAKSKVEQGQRAMRKQDEQNGSKWEPVFF) is disordered. Basic and acidic residues predominate over residues 615-633 (AKSKVEQGQRAMRKQDEQN).

Belongs to the OSBP family.

In terms of biological role, probable transporter; part of the gene cluster that mediates the biosynthesis of enfumafungin, a glycosylated fernene-type triterpenoid with potent antifungal activity, mediated by its interaction with beta-1,3-glucan synthase and the fungal cell wall. Might be involved in transport of enfumafungin to and across organelle membranes. The chain is Probable transporter efuK from Hormonema carpetanum.